The sequence spans 528 residues: MTDVVPDSNAPAYSVSELAFALKRTLETSYAFVRLRGELSKVTHHGNGHVYLTIKDDKSAIDGVVWKGNVRGLGIRPEHGLEVIVTGKITTYPAGSRYQIVIETMEAAGVGALLAQLERLKAKLNAEGLFAPDRKRPLPSMPAVVGVITSPTGAVIRDILHRIRDRWPCQVLVWPCVVQGDAAAGQVSAAIRGFNALTPGGPVPRPDILIVARGGGSVEDLWAFNDEGLARTVAEGTIPLISAVGHETDTTLIDFVSDRRAPTPTAAAEMATPVLAELRALVSDYDRRLNNCGGRAVEERRTRLTSAARGLPRPADLLALAQQRLDLAVRGLPRLDDLTAPAERRFKEAAARLDTALQRNTDIHARDLLKVTARLSPDTLHRQRADAGRRVGDLGRRLDLAARRVPERVAQHARLPALQDRLNAVARRRLERETDRLAGLEKLRQSLNPTRPLELGFALVHKADGGIARSASELASGERVRLQFRQGDRDAVIDGESSGVLPPSAAPAPTRPTPRPKPASSSDQGSLF.

A disordered region spans residues 486–528 (QGDRDAVIDGESSGVLPPSAAPAPTRPTPRPKPASSSDQGSLF). The span at 504 to 517 (SAAPAPTRPTPRPK) shows a compositional bias: pro residues.

This sequence belongs to the XseA family. Heterooligomer composed of large and small subunits.

It is found in the cytoplasm. The enzyme catalyses Exonucleolytic cleavage in either 5'- to 3'- or 3'- to 5'-direction to yield nucleoside 5'-phosphates.. Its function is as follows. Bidirectionally degrades single-stranded DNA into large acid-insoluble oligonucleotides, which are then degraded further into small acid-soluble oligonucleotides. The sequence is that of Exodeoxyribonuclease 7 large subunit from Caulobacter sp. (strain K31).